The following is a 1141-amino-acid chain: MRVRPFFNDSSWRRANLVTPIVRRKRHSYARLQSADAQLPNLIQIQLSSFQKFMDEGIRRTLEDISPIEDYSGSYAVEFGEHRFEEPPVSIEECMSKDKTYAAPLFVRVRFVIKETGEVREQDVFMGDFPLMTDWGTFIINGTERVVVTQLVRSPGAYVMEPKDPTKQVLTASLMPHRGSWLEFEVETKGYVSVRIDRKRKLPVTVLLKALGFGGPEEILARFGNSWLIRNTLERDDTTSREDALLEVFRRQRPGEPVNLENAQNLVDGLFFDPKRYDLSEVGRYKVNKKLRLDVPRDVHTLTIEDIEGLLRRLLGIAEEVAEEEEFGRINYERIRHKLDEYEHFGNRRLRTVGELVQEAFRIGMYRMERVVRERMTTQDEESITPQTVVNTKPVASAIKEFFGSSQLSQFMDQTNTLAGLSHRRRLNAMGAGGLSRERAPIEVRDVHPTHYGRMCPIETPEGPNIGLIGQLSTFARVNEYGFVQTPYRKVEDGRVTDEVEYLSADEEEEYTIAQANTPVDLETGRITAETVLARSRGGDVTTVSPEEVDYMDVSPVQTVSVATSLIPFLEHDDANRALMGANMQRQAVPLLRSEAPYVGTGMEFRAATDTGDVLLARNAGTVERVTASRIVVRREDGGLDEYALRKFARSNQGTCVNQRPLVKEGEEVEAGTVLADGSSTDQGELALGKNLLVAFMPWEGYNFEDAIIISERLVKEDVLTSIHIEEYEVQARDTKLGPEEITRDIPHASDDVLMNLDADGIIRIGAEVSSGDVLVGKVTPKGESEPTPEEKLLRAIFGEKAREVKDSSLKVPHGEGGVVIDVKRFSREAGDDLPPGVNEMVRVFVATKRKIAEGDKLAGRHGNKGVISKIVPEEDMPFMEDGTPVDVILSPLGVPSRMNIGQILETHLGWAASKGLGENGGEPVFVSTPVFSGATVADINEAIDKVRRNGAAEVGMSGGGKVTLYDGRTGEPFENKITVGYMYILKLLHLVDDKIHARSTGPYSLVTQQPLGGKAQFGGQRFGEMEVWALEAYGAAHTLQELLTIKSDDRVGRVKSYEAIVKGENIPSPSVPASFKVLLKEMQSLGLSVKPIYDVEAVSEEDQERRDWDEAARALGINISREEPPGQLDDTPDTFSRGGM.

Positions 1117 to 1141 are disordered; sequence GINISREEPPGQLDDTPDTFSRGGM.

Belongs to the RNA polymerase beta chain family. As to quaternary structure, the RNAP catalytic core consists of 2 alpha, 1 beta, 1 beta' and 1 omega subunit. When a sigma factor is associated with the core the holoenzyme is formed, which can initiate transcription.

The enzyme catalyses RNA(n) + a ribonucleoside 5'-triphosphate = RNA(n+1) + diphosphate. Functionally, DNA-dependent RNA polymerase catalyzes the transcription of DNA into RNA using the four ribonucleoside triphosphates as substrates. This Rubrobacter xylanophilus (strain DSM 9941 / JCM 11954 / NBRC 16129 / PRD-1) protein is DNA-directed RNA polymerase subunit beta.